Reading from the N-terminus, the 197-residue chain is Thymidylate kinase (197 aa).

Residue 7 to 14 (GIDGSGKS) participates in ATP binding.

This sequence belongs to the thymidylate kinase family.

It carries out the reaction dTMP + ATP = dTDP + ADP. Phosphorylation of dTMP to form dTDP in both de novo and salvage pathways of dTTP synthesis. The chain is Thymidylate kinase from Thermotoga petrophila (strain ATCC BAA-488 / DSM 13995 / JCM 10881 / RKU-1).